The sequence spans 719 residues: MRTVRTLLIDNYDSFTYNLFQMLAEVNGAAPLVVRNDDTRTWQALAPGDFDNVVVSPGPGHPATDTDLGLSRRVITEWDLPLLGVCLGHQALCLLAGAAVVHAPEPFHGRTSDIRHDGQGLFANIPSPLTVVRYHSLTVRQLPADLRATAHTADGQLMAVAHRHLPRFGVQFHPESISSEHGHRMLANFRDLSLRAAGHRPPHTERIPAPAPAPAPAPAPAPPASAPVGEYRLHVREVACVPDADAAFTALFADAPARFWLDSSRVEPGLARFTFLGAPAGPLGEQITYDVADRAVRVKDGSGGETRRPGTLFDHLEHELAARALPATGLPFEFNLGYVGYLGYETKADSGGEDAHRGELPDGAFMFADRMLALDHEQGRAWLLALSSTRRPATAPAAERWLTDAARTLATTAPRPPFTLLPDDQLPALDVHYRHSLPRYRELVEECRRLITDGETYEVCLTNMLRVPGRIDPLTAYRALRTVSPAPYAAYLQFPGATVLSSSPERFLRIGADGWAESKPIKGTRPRGAGPAQDAAVKASLAAAEKDRSENLMIVDLVRNDLGQVCDIGSVHVPGLFEVETYATVHQLVSTVRGRLAADVSRPRAVRAAFPGGSMTGAPKVRTMQFIDRLEKGPRGVYSGALGYFALSGAADLSIVIRTIVATEEAATIGVGGAVVALSDPDDEVREMLLKAQTTLAALRQAHAGATASDRELLAGSLR.

The 195-residue stretch at 5–199 (RTLLIDNYDS…RDLSLRAAGH (195 aa)) folds into the Glutamine amidotransferase type-1 domain. Residue C86 is the Nucleophile of the active site. Catalysis depends on residues H173 and E175. The interval 199-224 (HRPPHTERIPAPAPAPAPAPAPAPPA) is disordered. Over residues 209 to 224 (APAPAPAPAPAPAPPA) the composition is skewed to pro residues.

This sequence in the C-terminal section; belongs to the anthranilate synthase component I family.

The catalysed reaction is chorismate + L-glutamine = 4-amino-4-deoxychorismate + L-glutamate. It functions in the pathway antibiotic biosynthesis. Its function is as follows. Involved in pristinamycin I biosynthesis. Catalyzes the biosynthesis of 4-amino-4-deoxychorismate (ADC) from chorismate and glutamine. The polypeptide is Aminodeoxychorismate synthase (Streptomyces pristinaespiralis).